Consider the following 309-residue polypeptide: Electron transfer flavoprotein subunit alpha (309 aa).

253 to 281 (LYIAVGISGAIQHLAGMKDSKVIVAINKD) provides a ligand contact to FAD.

This sequence belongs to the ETF alpha-subunit/FixB family. In terms of assembly, heterodimer of an alpha and a beta subunit. The cofactor is FAD.

In terms of biological role, the electron transfer flavoprotein serves as a specific electron acceptor for other dehydrogenases. It transfers the electrons to the main respiratory chain via ETF-ubiquinone oxidoreductase (ETF dehydrogenase). The chain is Electron transfer flavoprotein subunit alpha (etfA) from Pseudomonas aeruginosa (strain ATCC 15692 / DSM 22644 / CIP 104116 / JCM 14847 / LMG 12228 / 1C / PRS 101 / PAO1).